We begin with the raw amino-acid sequence, 265 residues long: Membrane steroid-binding protein 2 (265 aa).

Residues 63–85 (WAAARSASPVAVIAAVAGAAVVY) traverse the membrane as a helical segment. The interval 94 to 116 (PPPPPARPREEPSEEAPPPPEPV) is disordered. The Cytochrome b5 heme-binding domain maps to 118-217 (VGEITAEELL…SKYVKVGTIK (100 aa)). Residues 120-217 (EITAEELLQY…SKYVKVGTIK (98 aa)) are steroid-binding.

The protein belongs to the cytochrome b5 family. MAPR subfamily.

The protein localises to the cell membrane. Functionally, binds multiple steroid compounds. The chain is Membrane steroid-binding protein 2 from Oryza sativa subsp. japonica (Rice).